A 524-amino-acid chain; its full sequence is PiggyBac transposable element-derived protein 5 (524 aa).

The segment at 30 to 117 (DDVFGESGPD…DTGGPTRKMP (88 aa)) is disordered. A compositionally biased stretch (low complexity) spans 47-59 (STSAASRSSSAAS). A compositionally biased stretch (pro residues) spans 67–79 (PGPPGAAPPPPRA). Residues 98–108 (LRDRPPPRFED) are compositionally biased toward basic and acidic residues. Position 521 is a phosphoserine (Ser521).

It localises to the nucleus. Its function is as follows. Transposase that mediates sequence-specific genomic rearrangements. Can induce genomic rearrangements that inactivate the HPRT1 gene. The sequence is that of PiggyBac transposable element-derived protein 5 (PGBD5) from Homo sapiens (Human).